The sequence spans 407 residues: 1-deoxy-D-xylulose 5-phosphate reductoisomerase (407 aa).

NADPH contacts are provided by Thr25, Gly26, Ser27, Ile28, Asn53, and Asn136. Lys137 is a 1-deoxy-D-xylulose 5-phosphate binding site. Position 138 (Glu138) interacts with NADPH. Asp162 contacts Mn(2+). 1-deoxy-D-xylulose 5-phosphate is bound by residues Ser163, Glu164, Ser188, and His211. A Mn(2+)-binding site is contributed by Glu164. Gly217 serves as a coordination point for NADPH. Residues Ser224, Asn229, Lys230, and Glu233 each coordinate 1-deoxy-D-xylulose 5-phosphate. A Mn(2+)-binding site is contributed by Glu233.

It belongs to the DXR family. Mg(2+) is required as a cofactor. Mn(2+) serves as cofactor.

It carries out the reaction 2-C-methyl-D-erythritol 4-phosphate + NADP(+) = 1-deoxy-D-xylulose 5-phosphate + NADPH + H(+). It participates in isoprenoid biosynthesis; isopentenyl diphosphate biosynthesis via DXP pathway; isopentenyl diphosphate from 1-deoxy-D-xylulose 5-phosphate: step 1/6. Catalyzes the NADPH-dependent rearrangement and reduction of 1-deoxy-D-xylulose-5-phosphate (DXP) to 2-C-methyl-D-erythritol 4-phosphate (MEP). The protein is 1-deoxy-D-xylulose 5-phosphate reductoisomerase of Bradyrhizobium sp. (strain BTAi1 / ATCC BAA-1182).